A 740-amino-acid polypeptide reads, in one-letter code: Catalase-peroxidase 2 (740 aa).

A signal peptide spans 1-27 (MFKKTKPRISILALTISCAIYSGAALA). A cross-link (tryptophyl-tyrosyl-methioninium (Trp-Tyr) (with M-254)) is located at residues 106–228 (WHSAGTYRIY…LAAVQMGLIY (123 aa)). His107 (proton acceptor) is an active-site residue. A cross-link (tryptophyl-tyrosyl-methioninium (Tyr-Met) (with W-106)) is located at residues 228 to 254 (YVNPEGPNGVPDPLLAAKDIRDTFGRM). His269 provides a ligand contact to heme b.

The protein belongs to the peroxidase family. Peroxidase/catalase subfamily. In terms of assembly, homodimer or homotetramer. Requires heme b as cofactor. Post-translationally, formation of the three residue Trp-Tyr-Met cross-link is important for the catalase, but not the peroxidase activity of the enzyme.

It carries out the reaction H2O2 + AH2 = A + 2 H2O. It catalyses the reaction 2 H2O2 = O2 + 2 H2O. Functionally, bifunctional enzyme with both catalase and broad-spectrum peroxidase activity. The protein is Catalase-peroxidase 2 of Cellvibrio japonicus (strain Ueda107) (Pseudomonas fluorescens subsp. cellulosa).